A 301-amino-acid chain; its full sequence is ATP synthase gamma chain (301 aa).

It belongs to the ATPase gamma chain family. F-type ATPases have 2 components, CF(1) - the catalytic core - and CF(0) - the membrane proton channel. CF(1) has five subunits: alpha(3), beta(3), gamma(1), delta(1), epsilon(1). CF(0) has three main subunits: a, b and c.

Its subcellular location is the cell inner membrane. In terms of biological role, produces ATP from ADP in the presence of a proton gradient across the membrane. The gamma chain is believed to be important in regulating ATPase activity and the flow of protons through the CF(0) complex. This Helicobacter acinonychis (strain Sheeba) protein is ATP synthase gamma chain.